The chain runs to 215 residues: Cytochrome b6 (215 aa).

Residues 32 to 52 (IFYCLGGITLTCFLVQVATGF) traverse the membrane as a helical segment. Cys35 serves as a coordination point for heme c. Positions 86 and 100 each coordinate heme b. The next 3 membrane-spanning stretches (helical) occupy residues 90 to 110 (ASMMVLMMILHVFRVYLTGGF), 116 to 136 (LTWVTGVVLAVLTASFGVTGY), and 186 to 206 (LHTFVLPLLTAVFMLMHFLMI). Residues His187 and His202 each contribute to the heme b site.

It belongs to the cytochrome b family. PetB subfamily. As to quaternary structure, the 4 large subunits of the cytochrome b6-f complex are cytochrome b6, subunit IV (17 kDa polypeptide, PetD), cytochrome f and the Rieske protein, while the 4 small subunits are PetG, PetL, PetM and PetN. The complex functions as a dimer. The cofactor is heme b. It depends on heme c as a cofactor.

The protein localises to the plastid. It localises to the chloroplast thylakoid membrane. In terms of biological role, component of the cytochrome b6-f complex, which mediates electron transfer between photosystem II (PSII) and photosystem I (PSI), cyclic electron flow around PSI, and state transitions. The polypeptide is Cytochrome b6 (Hordeum vulgare (Barley)).